The primary structure comprises 91 residues: Large ribosomal subunit protein bL27 (91 aa).

The disordered stretch occupies residues 1–21 (MAHKKAGGSSRNGRDSESKRL).

It belongs to the bacterial ribosomal protein bL27 family.

This Azoarcus sp. (strain BH72) protein is Large ribosomal subunit protein bL27.